Consider the following 662-residue polypeptide: MVVSEVDIAKADPAAASHPLLLNGDATVAQKNPGSVAENNLCSQYEEKVRPCIDLIDSLRALGVEQDLALPAIAVIGDQSSGKSSVLEALSGVALPRGSGIVTRCPLVLKLKKLVNEDKWRGKVSYQDYEIEISDASEVEKEINKAQNAIAGEGMGISHELITLEISSRDVPDLTLIDLPGITRVAVGNQPADIGYKIKTLIKKYIQRQETISLVVVPSNVDIATTEALSMAQEVDPEGDRTIGILTKPDLVDKGTEDKVVDVVRNLVFHLKKGYMIVKCRGQQEIQDQLSLSEALQREKIFFENHPYFRDLLEEGKATVPCLAEKLTSELITHICKSLPLLENQIKETHQRITEELQKYGVDIPEDENEKMFFLIDKVNAFNQDITALMQGEETVGEEDIRLFTRLRHEFHKWSTIIENNFQEGHKILSRKIQKFENQYRGRELPGFVNYRTFETIVKQQIKALEEPAVDMLHTVTDMVRLAFTDVSIKNFEEFFNLHRTAKSKIEDIRAEQEREGEKLIRLHFQMEQIVYCQDQVYRGALQKVREKELEEEKKKKSWDFGAFQSSSATDSSMEEIFQHLMAYHQEASKRISSHIPLIIQFFMLQTYGQQLQKAMLQLLQDKDTYSWLLKERSDTSDKRKFLKERLARLTQARRRLAQFPG.

The residue at position 1 (Met1) is an N-acetylmethionine; in Interferon-induced GTP-binding protein Mx1; alternate. One can recognise a Dynamin-type G domain in the interval 67 to 340 (DLALPAIAVI…LITHICKSLP (274 aa)). The segment at 77-84 (GDQSSGKS) is G1 motif. 77 to 84 (GDQSSGKS) provides a ligand contact to GTP. A G2 motif region spans residues 102–104 (VTR). Positions 178 to 181 (DLPG) are G3 motif. GTP contacts are provided by residues 178-182 (DLPGI) and 247-250 (TKPD). Residues 247–250 (TKPD) are G4 motif. The interval 279 to 282 (KCRG) is G5 motif. A bundle signaling element (BSE) region spans residues 341 to 366 (LLENQIKETHQRITEELQKYGVDIPE). Residues 366-533 (EDENEKMFFL…HFQMEQIVYC (168 aa)) are middle domain. Residues 367–632 (DENEKMFFLI…KDTYSWLLKE (266 aa)) are stalk. A critical for lipid-binding region spans residues 554–557 (KKKK). The 89-residue stretch at 574–662 (MEEIFQHLMA…ARRRLAQFPG (89 aa)) folds into the GED domain.

Belongs to the TRAFAC class dynamin-like GTPase superfamily. Dynamin/Fzo/YdjA family. In terms of assembly, homotetramer. Oligomerizes into multimeric filamentous or ring-like structures by virtue of its stalk domain. Oligomerization is critical for GTPase activity, protein stability, and recognition of viral target structures. Interacts with TRPC1, TRPC3, TRPC4, TRPC5, TRPC6 and TRPC7. Interacts with HSPA5. Interacts with DDX39A and DDX39B. Interacts with TUBB/TUBB5. The GTP-bound form interacts (via C-terminus) with THOV P5 protein. The GTP-bound form interacts with LACV protein N. Interacts with CCHFV protein N. Post-translationally, ISGylated.

It localises to the cytoplasm. It is found in the endoplasmic reticulum membrane. Its subcellular location is the perinuclear region. The protein localises to the nucleus. In terms of biological role, interferon-induced dynamin-like GTPase with antiviral activity against a wide range of RNA viruses and some DNA viruses. Its target viruses include negative-stranded RNA viruses and HBV through binding and inactivation of their ribonucleocapsid. May also antagonize reoviridae and asfarviridae replication. Inhibits thogoto virus (THOV) replication by preventing the nuclear import of viral nucleocapsids. Inhibits La Crosse virus (LACV) replication by sequestering viral nucleoprotein in perinuclear complexes, preventing genome amplification, budding, and egress. Inhibits influenza A virus (IAV) replication by decreasing or delaying NP synthesis and by blocking endocytic traffic of incoming virus particles. Enhances ER stress-mediated cell death after influenza virus infection. May regulate the calcium channel activity of TRPCs. The sequence is that of Interferon-induced GTP-binding protein Mx1 (MX1) from Homo sapiens (Human).